Consider the following 377-residue polypeptide: Ribosomal RNA large subunit methyltransferase G (377 aa).

It belongs to the methyltransferase superfamily. RlmG family.

Its subcellular location is the cytoplasm. The catalysed reaction is guanosine(1835) in 23S rRNA + S-adenosyl-L-methionine = N(2)-methylguanosine(1835) in 23S rRNA + S-adenosyl-L-homocysteine + H(+). Specifically methylates the guanine in position 1835 (m2G1835) of 23S rRNA. In Shewanella oneidensis (strain ATCC 700550 / JCM 31522 / CIP 106686 / LMG 19005 / NCIMB 14063 / MR-1), this protein is Ribosomal RNA large subunit methyltransferase G.